The following is a 430-amino-acid chain: Glutamate-1-semialdehyde 2,1-aminomutase (430 aa).

K270 carries the post-translational modification N6-(pyridoxal phosphate)lysine.

It belongs to the class-III pyridoxal-phosphate-dependent aminotransferase family. HemL subfamily. In terms of assembly, homodimer. The cofactor is pyridoxal 5'-phosphate.

The protein resides in the cytoplasm. It catalyses the reaction (S)-4-amino-5-oxopentanoate = 5-aminolevulinate. Its pathway is porphyrin-containing compound metabolism; protoporphyrin-IX biosynthesis; 5-aminolevulinate from L-glutamyl-tRNA(Glu): step 2/2. The chain is Glutamate-1-semialdehyde 2,1-aminomutase from Cupriavidus necator (strain ATCC 17699 / DSM 428 / KCTC 22496 / NCIMB 10442 / H16 / Stanier 337) (Ralstonia eutropha).